We begin with the raw amino-acid sequence, 152 residues long: D-aminoacyl-tRNA deacylase (152 aa).

The short motif at 137 to 138 is the Gly-cisPro motif, important for rejection of L-amino acids element; sequence GP.

This sequence belongs to the DTD family. In terms of assembly, homodimer.

The protein localises to the cytoplasm. It catalyses the reaction glycyl-tRNA(Ala) + H2O = tRNA(Ala) + glycine + H(+). The enzyme catalyses a D-aminoacyl-tRNA + H2O = a tRNA + a D-alpha-amino acid + H(+). Its function is as follows. An aminoacyl-tRNA editing enzyme that deacylates mischarged D-aminoacyl-tRNAs. Also deacylates mischarged glycyl-tRNA(Ala), protecting cells against glycine mischarging by AlaRS. Acts via tRNA-based rather than protein-based catalysis; rejects L-amino acids rather than detecting D-amino acids in the active site. By recycling D-aminoacyl-tRNA to D-amino acids and free tRNA molecules, this enzyme counteracts the toxicity associated with the formation of D-aminoacyl-tRNA entities in vivo and helps enforce protein L-homochirality. This is D-aminoacyl-tRNA deacylase from Geobacter sulfurreducens (strain ATCC 51573 / DSM 12127 / PCA).